The chain runs to 581 residues: Amino-acid acetyltransferase, mitochondrial (581 aa).

The N-acetyltransferase domain maps to 401–558 (FTLHNLIEDE…RIVGSEAVNI (158 aa)).

This sequence belongs to the acetyltransferase family.

The protein resides in the mitochondrion. The catalysed reaction is L-glutamate + acetyl-CoA = N-acetyl-L-glutamate + CoA + H(+). It participates in amino-acid biosynthesis; L-arginine biosynthesis; N(2)-acetyl-L-ornithine from L-glutamate: step 1/4. Functionally, N-acetylglutamate synthase involved in arginine biosynthesis. This Scheffersomyces stipitis (strain ATCC 58785 / CBS 6054 / NBRC 10063 / NRRL Y-11545) (Yeast) protein is Amino-acid acetyltransferase, mitochondrial (ARG2).